Here is a 359-residue protein sequence, read N- to C-terminus: Peptide chain release factor 1 (359 aa).

Residue Q235 is modified to N5-methylglutamine.

This sequence belongs to the prokaryotic/mitochondrial release factor family. Methylated by PrmC. Methylation increases the termination efficiency of RF1.

The protein localises to the cytoplasm. Its function is as follows. Peptide chain release factor 1 directs the termination of translation in response to the peptide chain termination codons UAG and UAA. In Ehrlichia ruminantium (strain Gardel), this protein is Peptide chain release factor 1.